Reading from the N-terminus, the 810-residue chain is Eukaryotic translation initiation factor 3 subunit C (810 aa).

Positions 1–11 are enriched in polar residues; that stretch reads MSRFFATNYNY. The tract at residues 1 to 98 is disordered; it reads MSRFFATNYN…DSDESDEEDG (98 aa). Low complexity predominate over residues 12-33; that stretch reads DETSSSSEEDLLSSSEELLSSS. Positions 34–58 are enriched in acidic residues; that stretch reads EEGELSDDSLFNDESESESDFDSDD. The region spanning 605 to 780 is the PCI domain; it reads YHQHINLDLV…TYIVIEKGDE (176 aa).

It belongs to the eIF-3 subunit C family. In terms of assembly, component of the eukaryotic translation initiation factor 3 (eIF-3) complex.

The protein localises to the cytoplasm. Functionally, component of the eukaryotic translation initiation factor 3 (eIF-3) complex, which is involved in protein synthesis of a specialized repertoire of mRNAs and, together with other initiation factors, stimulates binding of mRNA and methionyl-tRNAi to the 40S ribosome. The eIF-3 complex specifically targets and initiates translation of a subset of mRNAs involved in cell proliferation. This Candida glabrata (strain ATCC 2001 / BCRC 20586 / JCM 3761 / NBRC 0622 / NRRL Y-65 / CBS 138) (Yeast) protein is Eukaryotic translation initiation factor 3 subunit C.